We begin with the raw amino-acid sequence, 1050 residues long: Inositol hexakisphosphate kinase 1 (1050 aa).

4 disordered regions span residues 87-117 (KITR…LSSS), 129-177 (PAIK…IQNV), 269-319 (RQEN…DNEH), and 396-423 (SDLD…NNND). The residue at position 150 (Ser150) is a Phosphoserine. The span at 156–173 (KQQSHQPQVLHHQTSLKP) shows a compositional bias: polar residues. The span at 290–306 (ESIKEKPNTFEQDKEGE) shows a compositional bias: basic and acidic residues. A compositionally biased stretch (acidic residues) spans 307–316 (QADEEEDEGD). Ser396 carries the phosphoserine modification. The segment covering 402–417 (NNGKNDTSNENKDIEV) has biased composition (basic and acidic residues). Ser469 carries the post-translational modification Phosphoserine. Positions 508-522 (NDSYFSSSSSHNSCS) are enriched in low complexity. Disordered regions lie at residues 508–539 (NDSY…DSGS) and 562–625 (RKRN…PNLQ). Residues Ser537, Ser539, Ser566, Ser583, Ser589, Ser646, Ser664, and Ser670 each carry the phosphoserine modification. Over residues 566–624 (SNTTTMGNHNARLGSSPSFLTQKSRASSHDASNTSMKTLGDSSSQASLQMDDSKVNPNL) the composition is skewed to polar residues. A substrate-binding site is contributed by 772-780 (PCALDLKMG).

It belongs to the inositol phosphokinase (IPK) family.

Its subcellular location is the cytoplasm. The enzyme catalyses 1D-myo-inositol hexakisphosphate + ATP = 5-diphospho-1D-myo-inositol 1,2,3,4,6-pentakisphosphate + ADP. It carries out the reaction 1-diphospho-1D-myo-inositol 2,3,4,5,6-pentakisphosphate + ATP + H(+) = 1,5-bis(diphospho)-1D-myo-inositol 2,3,4,6-tetrakisphosphate + ADP. Converts inositol hexakisphosphate (InsP6) to diphosphoinositol pentakisphosphate (InsP7/PP-InsP5). Involved in phosphate regulation and polyphosphate accumulation. Required for resistance to salt stress, cell wall integrity, vacuole morphogenesis, and telomere maintenance. In Saccharomyces cerevisiae (strain ATCC 204508 / S288c) (Baker's yeast), this protein is Inositol hexakisphosphate kinase 1 (KCS1).